Consider the following 1259-residue polypeptide: Lysine-specific demethylase 2B (1259 aa).

The 169-residue stretch at 147–315 folds into the JmjC domain; sequence FSHTKLERVV…MQLRVFEIED (169 aa). Thr208 provides a ligand contact to substrate. Residues His211 and Asp213 each coordinate Fe cation. Lys228 lines the substrate pocket. Residue His283 participates in Fe cation binding. The span at 388 to 402 shows a compositional bias: basic and acidic residues; sequence EEKGNLVEKPSKQSG. 2 disordered regions span residues 388–463 and 536–562; these read EEKG…ATDM and KPSK…SANR. Polar residues predominate over residues 403–413; sequence DESSTTNSTHS. Residues 414–423 are compositionally biased toward basic and acidic residues; it reads NGKDAAEKKQ. Over residues 426 to 437 the composition is skewed to polar residues; sequence TLMQQLKRTLSN. Positions 536–548 are enriched in basic residues; sequence KPSKNRAVGRPKG. Residues 567-613 form a CXXC-type zinc finger; sequence ARRRRTRCRKCEACLRTECGECHFCKDMKKFGGPGRMKQSCIMRQCI. Residues Cys574, Cys577, Cys580, Cys585, Cys588, Cys591, Cys607, Cys612, Cys623, Cys626, Cys649, Cys652, His657, Cys660, Cys680, and Cys683 each coordinate Zn(2+). Residues 620–686 form a PHD-type zinc finger; it reads TAVCLVCGEA…CWECPKCNHA (67 aa). Basic and acidic residues-rich tracts occupy residues 729 to 763 and 771 to 790; these read KKKV…EDGH and EKPP…EEKL. The segment at 729–958 is disordered; sequence KKKVEREETP…PPPSLSPPKC (230 aa). Over residues 835 to 848 the composition is skewed to polar residues; it reads SRSSSPTAGPSTEG. The segment covering 854 to 863 has biased composition (basic residues); it reads KKKIRRKRRV. Residues 864-877 show a composition bias toward basic and acidic residues; sequence SNKELSKELSKELN. Positions 864 to 891 form a coiled coil; the sequence is SNKELSKELSKELNQEIQKTESSLASEN. Over residues 878-889 the composition is skewed to polar residues; sequence QEIQKTESSLAS. Positions 890 to 908 are enriched in basic and acidic residues; that stretch reads ENHHPIKSEPESDNEESKK. The F-box domain occupies 985-1030; it reads AHVMQREVWMAIFSYLSHRDLCICMRICRTWNRWCCDKRLWTQIDL. 5 LRR repeats span residues 1056 to 1081, 1082 to 1105, 1145 to 1170, 1171 to 1200, and 1201 to 1225; these read WTNI…NLSG, CSWI…NVQW, GLDI…DLSY, CNHV…NLSD, and CNNV…DLRF.

Belongs to the JHDM1 histone demethylase family. Fe(2+) is required as a cofactor.

It localises to the nucleus. It is found in the nucleolus. Its subcellular location is the chromosome. It carries out the reaction N(6),N(6)-dimethyl-L-lysyl(36)-[histone H3] + 2 2-oxoglutarate + 2 O2 = L-lysyl(36)-[histone H3] + 2 formaldehyde + 2 succinate + 2 CO2. Histone demethylase activity is inhibited by fumarate. Functionally, histone demethylase that demethylates 'Lys-4' and 'Lys-36' of histone H3, thereby playing a central role in histone code. Preferentially demethylates trimethylated H3 'Lys-4' and dimethylated H3 'Lys-36' residue while it has weak or no activity for mono- and tri-methylated H3 'Lys-36'. Preferentially binds the transcribed region of ribosomal RNA and represses the transcription of ribosomal RNA genes which inhibits cell growth and proliferation. This chain is Lysine-specific demethylase 2B (kdm2b), found in Xenopus laevis (African clawed frog).